Consider the following 993-residue polypeptide: P3N-PIPO polyprotein (993 aa).

The Peptidase S30 domain occupies G154–Y298. Residues H207, D216, and S249 each act as for P1 proteinase activity in the active site. An Involved in interaction with stylet and aphid transmission motif is present at residues K349–C352. An Involved in virions binding and aphid transmission motif is present at residues P607–K609. The region spanning M633–G755 is the Peptidase C6 domain. Residues C641 and H714 each act as for helper component proteinase activity in the active site.

This sequence belongs to the potyviridae P3N-PIPO polyprotein family. As to quaternary structure, interacts (via PIPO domain) with host PCaP1 protein; this interaction may help to anchor the movement complex to the plasma membrane from which the complex could move to the plasmodesmata. Post-translationally, potyviral RNA is expressed as two polyproteins which undergo post-translational proteolytic processing. Genome polyprotein is processed by NIa-pro, P1 and HC-pro proteinases resulting in the production of at least ten individual proteins. P3N-PIPO is cleaved by P1 and HC-pro proteinases resulting in the production of three individual proteins. The P1 proteinase and the HC-pro cleave only their respective C-termini autocatalytically.

The protein resides in the host cell junction. Its subcellular location is the host plasmodesma. The catalysed reaction is Hydrolyzes a Gly-|-Gly bond at its own C-terminus, commonly in the sequence -Tyr-Xaa-Val-Gly-|-Gly, in the processing of the potyviral polyprotein.. Its function is as follows. Required for aphid transmission and also has proteolytic activity. Only cleaves a Gly-Gly dipeptide at its own C-terminus. Interacts with virions and aphid stylets. Acts as a suppressor of RNA-mediated gene silencing, also known as post-transcriptional gene silencing (PTGS), a mechanism of plant viral defense that limits the accumulation of viral RNAs. May have RNA-binding activity. Functionally, allows efficient cell to cell propagation, by bypassing the host cell wall barrier. Transports viral genome to neighboring plant cells directly through plasmosdesmata, without any budding. The chain is P3N-PIPO polyprotein from Solanum betaceum (Tamarillo).